Consider the following 632-residue polypeptide: 2-oxoacid:ferredoxin oxidoreductase subunit alpha (632 aa).

The short motif at 253 to 257 (YPITP) is the YPITP motif element. Substrate contacts are provided by Thr-256 and Arg-344.

In terms of assembly, heterodimer composed of an alpha and a beta subunit.

It localises to the cytoplasm. The enzyme catalyses a 2-oxocarboxylate + 2 oxidized [2Fe-2S]-[ferredoxin] + CoA = an acyl-CoA + 2 reduced [2Fe-2S]-[ferredoxin] + CO2 + H(+). Functionally, catalyzes the coenzyme A-dependent oxidative decarboxylation of different 2-oxoacids such as 2-oxoglutarate, pyruvate and 2-oxobutyrate to form their CoA derivatives. This Sulfolobus sp protein is 2-oxoacid:ferredoxin oxidoreductase subunit alpha.